Reading from the N-terminus, the 263-residue chain is Putative S-adenosyl-L-methionine-dependent methyltransferase Mjls_0079 (263 aa).

Residues Asp121 and 150–151 (ES) each bind S-adenosyl-L-methionine.

The protein belongs to the UPF0677 family.

Functionally, exhibits S-adenosyl-L-methionine-dependent methyltransferase activity. The sequence is that of Putative S-adenosyl-L-methionine-dependent methyltransferase Mjls_0079 from Mycobacterium sp. (strain JLS).